Reading from the N-terminus, the 2111-residue chain is Fatty acid synthase beta subunit aflB (2111 aa).

The segment at 200 to 565 is acetyltransferase (AT) domain; sequence IVTVFNGQGV…KAGTAARVIL (366 aa). An enoyl reductase (ER) domain region spans residues 618–863; that stretch reads SRALGLPPVM…AIVDTPGVPD (246 aa). Residues 1195 to 1688 are dehydratase (DH) domain; it reads GTKPSWRKAL…SPGETLLVDI (494 aa). Residues 1606-1708 form the MaoC-like domain; the sequence is EMPTSSDQYA…IVVATARSES (103 aa). The tract at residues 1727-2091 is malonyl/palmitoyl transferase (MT/PT) domain; the sequence is YLFTGQGSQK…FENVLAISES (365 aa).

Belongs to the fungal fatty acid synthetase subunit beta family. In terms of assembly, [Alpha(6)beta(6)] hexamers of two multifunctional subunits (alpha and beta).

The enzyme catalyses acetyl-CoA + n malonyl-CoA + 2n NADPH + 4n H(+) = a long-chain-acyl-CoA + n CoA + n CO2 + 2n NADP(+).. It carries out the reaction holo-[ACP] + acetyl-CoA = acetyl-[ACP] + CoA. It catalyses the reaction holo-[ACP] + malonyl-CoA = malonyl-[ACP] + CoA. The catalysed reaction is a (3R)-hydroxyacyl-[ACP] = a (2E)-enoyl-[ACP] + H2O. The enzyme catalyses a 2,3-saturated acyl-[ACP] + NAD(+) = a (2E)-enoyl-[ACP] + NADH + H(+). It carries out the reaction (9Z)-octadecenoyl-[ACP] + H2O = (9Z)-octadecenoate + holo-[ACP] + H(+). Its pathway is secondary metabolite biosynthesis. Functionally, fatty acid synthase beta subunit; part of the gene cluster that mediates the biosynthesis of aspercryptins, linear lipopeptides built from six amino acids including 2 highly unusual and nonproteogenic amino acids, 2-amino-octanoic acid (2aoa) and 2-amino-dodecanol (2adol). The core structure of aspercryptins is as follows: Ser/Ala-Thr-Ile/Val-2aoa-Asn-2adol. The first step of aspercryptin biosynthesis is the generation of the fatty acid precursors, octanoic and dodecanoic acids, by the FAS subunits atnF and atnM. The fatty acid precursors are likely transformed into the corresponding alpha-amino fatty acids in three steps. First, they are hydroxylated by the cytochrome P450 monooxygenase atnE, then oxidized to the corresponding alpha-keto acids by the NAD(P)-dependent oxidoreductase atnD, and finally converted to the alpha-amino fatty acids by the PLP-dependent aminotransferases atnH or atnJ. the alpha-amino fatty acids, 2-amino-octanoic and 2-amino-dodecanoic acids, are recognized, activated, and covalently tethered to the NRPS atnA by its fourth and sixth adenylation domains. The second module of atnA is the Thr module and contains an epimerase (E) domain responsible for the epimerization of Thr to D-allo-Thr. Additionally, despite atnA having only one epimerase domain, the first amino acid of aspercryptin A1 is D-Ser, suggesting that serine is either loaded directly as D-Ser on the first module or that the epimerase domain in the threonine module epimerizes both L-Ser and L-Thr. After condensation of the hexapeptide of aspercryptin, the C-terminal reductase (TE) domain might be involved in the reductive release and production of the aldehyde hexapeptide. Further reduction would generate aspercryptins. The variety of aspercryptins produced reflects the flexibility of the atnA NRPS, allowing incorporation of alanine instead of serine, valine for isoleucine, and a C10 fatty amino alcohol instead of the C12 version. AtnB seems to be involved in the selectivity for Ile versus Val by the third module. Moreover, type B, C and D aspercryptins have an additional N-terminal cichorine, acetyl and propionyl group respectively. The chain is Fatty acid synthase beta subunit aflB from Emericella nidulans (strain FGSC A4 / ATCC 38163 / CBS 112.46 / NRRL 194 / M139) (Aspergillus nidulans).